We begin with the raw amino-acid sequence, 114 residues long: MVDQNPKRSGEPPVWLMFGAGGTVSAIFLPVVILIIGLLLPFGLVDVHNLITFAYSWIGKLVILVLTIFPMWCGLHRIHHGMHDLKVHVPAGGFIFYGLATIYTVWVLFAVINL.

The next 3 membrane-spanning stretches (helical) occupy residues 24-44 (VSAIFLPVVILIIGLLLPFGL), 50-70 (LITFAYSWIGKLVILVLTIFP), and 92-112 (GGFIFYGLATIYTVWVLFAVI).

It belongs to the FrdD family. In terms of assembly, part of an enzyme complex containing four subunits: a flavoprotein (FrdA), an iron-sulfur protein (FrdB), and two hydrophobic anchor proteins (FrdC and FrdD).

It is found in the cell inner membrane. Its function is as follows. Anchors the catalytic components of the fumarate reductase complex to the cell membrane, binds quinones. The polypeptide is Fumarate reductase subunit D (Haemophilus influenzae (strain ATCC 51907 / DSM 11121 / KW20 / Rd)).